The following is a 758-amino-acid chain: ATP-dependent RNA helicase dbp7 (758 aa).

2 disordered regions span residues G26–Q99 and P111–N130. A compositionally biased stretch (basic residues) spans A35–G45. Polar residues predominate over residues G84–Q99. A compositionally biased stretch (basic and acidic residues) spans P111–K127. The Q motif signature appears at D138–K167. The region spanning S171–I372 is the Helicase ATP-binding domain. A184 to T191 provides a ligand contact to ATP. Residues D308–D311 carry the DEAD box motif. Positions Q398–I603 constitute a Helicase C-terminal domain. 2 disordered regions span residues K455–T483 and V691–A758. Positions Q696–R709 are enriched in basic and acidic residues.

Belongs to the DEAD box helicase family. DDX31/DBP7 subfamily.

The protein resides in the nucleus. Its subcellular location is the nucleolus. It carries out the reaction ATP + H2O = ADP + phosphate + H(+). In terms of biological role, ATP-binding RNA helicase involved in the biogenesis of 60S ribosomal subunits and is required for the normal formation of 25S and 5.8S rRNAs. The chain is ATP-dependent RNA helicase dbp7 (dbp7) from Neosartorya fischeri (strain ATCC 1020 / DSM 3700 / CBS 544.65 / FGSC A1164 / JCM 1740 / NRRL 181 / WB 181) (Aspergillus fischerianus).